The following is a 518-amino-acid chain: AarF domain-containing kinase 1 (518 aa).

Residues 149–468 enclose the Protein kinase domain; it reads SFEREPLGTA…SKCCVQSSYA (320 aa). Residues 155 to 163 and Lys177 each bind ATP; that span reads LGTASLAQV. Asp309 acts as the Proton acceptor in catalysis.

The protein belongs to the protein kinase superfamily. ADCK protein kinase family.

Its subcellular location is the mitochondrion. Its function is as follows. Essential for maintaining mitochondrial cristae formation and mitochondrial function by acting via YME1L to regulate the mitochondrial structural proteins Opa1 and Mitofilin. This function is likely to be kinase-independent. Functions in tracheal development and larval molting probably by acting in sterol modification and/or intracellular lipid trafficking. The action of this enzyme is not yet clear. It is not known if it has protein kinase activity and what type of substrate it would phosphorylate (Ser, Thr or Tyr). In Drosophila melanogaster (Fruit fly), this protein is AarF domain-containing kinase 1.